A 743-amino-acid chain; its full sequence is Dystrobrevin alpha (743 aa).

The segment at 1–288 (MIEDSGKRGN…SHSNQHQMKE (288 aa)) is interaction with MAGEE1. A ZZ-type zinc finger spans residues 238–294 (FHPVECSYCHSESMMGFRYRCQQCHNYQLCQDCFWRGHAGGSHSNQHQMKEYTSWKS). Positions 243, 246, 258, 261, 267, 270, 280, and 284 each coordinate Zn(2+). The syntrophin-binding region stretch occupies residues 400–450 (DRLADEHVLIGLYVNMLRNNPSCMLESSNRLDEEHRLIARYAARLAAESSS). The stretch at 461–556 (DISFTIDANK…EGLMKLLKTQ (96 aa)) forms a coiled coil. Residues 556-575 (QGAGSPRSSPSHTISRPIPM) form a disordered region. Over residues 557-569 (GAGSPRSSPSHTI) the composition is skewed to polar residues. A Phosphoserine modification is found at Ser662.

Belongs to the dystrophin family. Dystrobrevin subfamily. In terms of assembly, interacts with dystrophin, utrophin and the syntrophins SNTA1, SNTB1, SNTB2, SNTG1 and SNTG2. Interacts with MAGEE1. Binds dystrobrevin binding protein 1. Interacts with CTNNAL1. The interaction is required for correct localization of both CTNNAL1 and DTNA. As to quaternary structure, does not interact with dystrophin. Phosphorylation of DTN-1 on tyrosine kinase substrate domain present in the C-terminus. In terms of tissue distribution, highly expressed in brain, skeletal and cardiac muscles, and expressed at lower levels in lung, liver and pancreas. Isoform 2 is not expressed in cardiac muscle. Isoform 7 and isoform 8 are only expressed in muscle.

Its subcellular location is the cytoplasm. It localises to the synapse. The protein resides in the cell membrane. May be involved in the formation and stability of synapses as well as being involved in the clustering of nicotinic acetylcholine receptors. This chain is Dystrobrevin alpha, found in Homo sapiens (Human).